We begin with the raw amino-acid sequence, 107 residues long: uncharacterized protein (107 aa).

The helical transmembrane segment at 52-72 (LIIHDLFIYIFILNFFFFPFC) threads the bilayer.

Its subcellular location is the membrane. This is an uncharacterized protein from Saccharomyces cerevisiae (strain ATCC 204508 / S288c) (Baker's yeast).